Consider the following 291-residue polypeptide: Nucleotide-binding protein Ccel_2290 (291 aa).

8 to 15 contributes to the ATP binding site; it reads GMSGAGKS. 59–62 contributes to the GTP binding site; it reads DIRG.

The protein belongs to the RapZ-like family.

Displays ATPase and GTPase activities. This chain is Nucleotide-binding protein Ccel_2290, found in Ruminiclostridium cellulolyticum (strain ATCC 35319 / DSM 5812 / JCM 6584 / H10) (Clostridium cellulolyticum).